The primary structure comprises 340 residues: Probable dual-specificity RNA methyltransferase RlmN (340 aa).

Glu91 functions as the Proton acceptor in the catalytic mechanism. The Radical SAM core domain occupies 97-326 (HSGRVTACIS…CEIRKEKGTD (230 aa)). A disulfide bond links Cys104 and Cys331. Positions 111, 115, and 118 each coordinate [4Fe-4S] cluster. S-adenosyl-L-methionine is bound by residues 158–159 (GE), Ser190, 213–215 (SLH), and Asn289. The active-site S-methylcysteine intermediate is the Cys331.

The protein belongs to the radical SAM superfamily. RlmN family. The cofactor is [4Fe-4S] cluster.

It localises to the cytoplasm. It carries out the reaction adenosine(2503) in 23S rRNA + 2 reduced [2Fe-2S]-[ferredoxin] + 2 S-adenosyl-L-methionine = 2-methyladenosine(2503) in 23S rRNA + 5'-deoxyadenosine + L-methionine + 2 oxidized [2Fe-2S]-[ferredoxin] + S-adenosyl-L-homocysteine. The enzyme catalyses adenosine(37) in tRNA + 2 reduced [2Fe-2S]-[ferredoxin] + 2 S-adenosyl-L-methionine = 2-methyladenosine(37) in tRNA + 5'-deoxyadenosine + L-methionine + 2 oxidized [2Fe-2S]-[ferredoxin] + S-adenosyl-L-homocysteine. Its function is as follows. Specifically methylates position 2 of adenine 2503 in 23S rRNA and position 2 of adenine 37 in tRNAs. The protein is Probable dual-specificity RNA methyltransferase RlmN of Thermosipho melanesiensis (strain DSM 12029 / CIP 104789 / BI429).